Here is a 757-residue protein sequence, read N- to C-terminus: Kin of IRRE-like protein 1 (757 aa).

The N-terminal stretch at 1–16 (MLSLLVWILTLSDTFS) is a signal peptide. The Extracellular portion of the chain corresponds to 17 to 499 (QGTQTRFSQE…REVLPVGIIA (483 aa)). Ig-like C2-type domains lie at 21–115 (TRFS…AKLT), 120–216 (PEDT…TSIE), 223–299 (PTVT…TNVS), 308–387 (PRIV…EVPL), and 392–488 (PPII…IQLE). C42 and C100 are joined by a disulfide. 2 N-linked (GlcNAc...) asparagine glycosylation sites follow: N46 and N140. Cystine bridges form between C143–C200 and C244–C287. N297 is a glycosylation site (N-linked (GlcNAc...) asparagine). The cysteines at positions 329 and 371 are disulfide-linked. Positions 405 to 407 (RGD) match the Cell attachment site motif. An intrachain disulfide couples C413 to C472. A glycan (N-linked (GlcNAc...) asparagine) is linked at N471. A helical membrane pass occupies residues 500 to 520 (GATIGASILLIFFFIALVFFL). Over 521–757 (YRRRKGSRKD…RFQQRMQTHV (237 aa)) the chain is Cytoplasmic. S574 is modified (phosphoserine). Phosphotyrosine; by FYN is present on residues Y605 and Y606. A phosphotyrosine mark is found at Y622 and Y625. The segment at 649-679 (QLNTYSRGPASDYGPEPTPPGPAAPAGTDTT) is disordered. A Phosphotyrosine modification is found at Y724.

This sequence belongs to the immunoglobulin superfamily. In terms of assembly, interacts with TJP1/ZO-1 and with NPHS2/podocin (via the C-terminus). Interacts with NPHS1/nephrin (via the Ig-like domains); this interaction is dependent on KIRREL1 glycosylation. Homodimer (via the Ig-like domains). Interacts when tyrosine-phosphorylated with GRB2. In terms of processing, phosphorylation probably regulates the interaction with NSH2. Phosphorylated at Tyr-605 and Tyr-606 by FYN, leading to GRB2 binding. N-glycosylated. Abundantly expressed in kidney. Specifically expressed in podocytes of kidney glomeruli.

The protein localises to the cell membrane. Required for proper function of the glomerular filtration barrier. It is involved in the maintenance of a stable podocyte architecture with interdigitating foot processes connected by specialized cell-cell junctions, known as the slit diaphragm. It is a signaling protein that needs the presence of TEC kinases to fully trans-activate the transcription factor AP-1. The chain is Kin of IRRE-like protein 1 from Homo sapiens (Human).